The primary structure comprises 640 residues: 1-deoxy-D-xylulose-5-phosphate synthase (640 aa).

Thiamine diphosphate contacts are provided by residues His77 and Ala118–Ala120. A Mg(2+)-binding site is contributed by Asp149. Residues Gly150–Ser151, Asn178, Tyr287, and Glu369 contribute to the thiamine diphosphate site. Asn178 contacts Mg(2+).

It belongs to the transketolase family. DXPS subfamily. Homodimer. Mg(2+) is required as a cofactor. Requires thiamine diphosphate as cofactor.

The catalysed reaction is D-glyceraldehyde 3-phosphate + pyruvate + H(+) = 1-deoxy-D-xylulose 5-phosphate + CO2. The protein operates within metabolic intermediate biosynthesis; 1-deoxy-D-xylulose 5-phosphate biosynthesis; 1-deoxy-D-xylulose 5-phosphate from D-glyceraldehyde 3-phosphate and pyruvate: step 1/1. Catalyzes the acyloin condensation reaction between C atoms 2 and 3 of pyruvate and glyceraldehyde 3-phosphate to yield 1-deoxy-D-xylulose-5-phosphate (DXP). This chain is 1-deoxy-D-xylulose-5-phosphate synthase, found in Caulobacter vibrioides (strain NA1000 / CB15N) (Caulobacter crescentus).